A 116-amino-acid chain; its full sequence is Phosphoribosyl-AMP cyclohydrolase (116 aa).

Residue aspartate 82 coordinates Mg(2+). Cysteine 83 provides a ligand contact to Zn(2+). Mg(2+)-binding residues include aspartate 84 and aspartate 86. Residues cysteine 99 and cysteine 106 each coordinate Zn(2+).

It belongs to the PRA-CH family. Homodimer. Mg(2+) is required as a cofactor. Zn(2+) serves as cofactor.

The protein resides in the cytoplasm. The enzyme catalyses 1-(5-phospho-beta-D-ribosyl)-5'-AMP + H2O = 1-(5-phospho-beta-D-ribosyl)-5-[(5-phospho-beta-D-ribosylamino)methylideneamino]imidazole-4-carboxamide. It functions in the pathway amino-acid biosynthesis; L-histidine biosynthesis; L-histidine from 5-phospho-alpha-D-ribose 1-diphosphate: step 3/9. Functionally, catalyzes the hydrolysis of the adenine ring of phosphoribosyl-AMP. This is Phosphoribosyl-AMP cyclohydrolase from Saccharopolyspora erythraea (strain ATCC 11635 / DSM 40517 / JCM 4748 / NBRC 13426 / NCIMB 8594 / NRRL 2338).